We begin with the raw amino-acid sequence, 616 residues long: Endonuclease 8-like 3 (616 aa).

The FPG-type zinc-finger motif lies at 271 to 305; the sequence is KVYKRPNCGQCGTKITVCRLGEHNRMTYFCPKCQK. The segment at 341–370 adopts a RanBP2-type zinc-finger fold; that stretch reads KEEHWACAVCTLINKPSDKQCDACLTLRPE. The disordered stretch occupies residues 491–524; the sequence is LKTGHTTSNTIHLSSTISSPQSKMTGDAAAKTGN. Over residues 494–514 the composition is skewed to polar residues; that stretch reads GHTTSNTIHLSSTISSPQSKM. Zn(2+) is bound by residues Cys-527, His-530, Cys-553, Cys-561, Cys-574, His-576, Cys-599, and Cys-607. 2 GRF-type zinc fingers span residues 527–570 and 574–616; these read CSAH…ADLH and CNHG…AKTE.

This sequence belongs to the FPG family.

The protein resides in the nucleus. Its subcellular location is the chromosome. The catalysed reaction is 2'-deoxyribonucleotide-(2'-deoxyribose 5'-phosphate)-2'-deoxyribonucleotide-DNA = a 3'-end 2'-deoxyribonucleotide-(2,3-dehydro-2,3-deoxyribose 5'-phosphate)-DNA + a 5'-end 5'-phospho-2'-deoxyribonucleoside-DNA + H(+). Functionally, DNA glycosylase which prefers single-stranded DNA (ssDNA), or partially ssDNA structures such as bubble and fork structures, to double-stranded DNA (dsDNA). Mediates interstrand cross-link repair in response to replication stress: recruited to replication stress sites via interaction with ubiquitinated CMG helicase and acts by mediating DNA glycosylase activity. Cleaves one of the two N-glycosyl bonds comprising the interstrand cross-link, which avoids the formation of a double-strand break but generates an abasic site that is bypassed by translesion synthesis polymerases. The sequence is that of Endonuclease 8-like 3 from Xenopus laevis (African clawed frog).